A 332-amino-acid chain; its full sequence is Heat-inducible transcription repressor HrcA (332 aa).

The protein belongs to the HrcA family.

In terms of biological role, negative regulator of class I heat shock genes (grpE-dnaK-dnaJ and groELS operons). Prevents heat-shock induction of these operons. The polypeptide is Heat-inducible transcription repressor HrcA (Mycoplasma mobile (strain ATCC 43663 / 163K / NCTC 11711) (Mesomycoplasma mobile)).